A 39-amino-acid chain; its full sequence is Decorsin (39 aa).

Residues 27-38 (CRFPRGDADPYC) form a high affinity binding domain region. The Cell attachment site signature appears at 31 to 33 (RGD).

This sequence belongs to the ornatin family.

The protein localises to the secreted. Functionally, inhibits fibrinogen interaction with platelet receptors expressed on glycoprotein IIb-IIIa complex. May prevent blood from clotting during either feeding and/or storage of ingested blood. The sequence is that of Decorsin from Macrobdella decora (North American leech).